The following is a 318-amino-acid chain: Protein-methionine-sulfoxide reductase catalytic subunit MsrP (318 aa).

A signal peptide (tat-type signal) is located at residues Met1–Ala40. Mo-molybdopterin contacts are provided by residues Asn72, Tyr75–Glu76, Cys130, Thr165, Asn217, Arg222, and Ser233–Lys235.

This sequence belongs to the MsrP family. In terms of assembly, heterodimer of a catalytic subunit (MsrP) and a heme-binding subunit (MsrQ). Mo-molybdopterin serves as cofactor. In terms of processing, predicted to be exported by the Tat system. The position of the signal peptide cleavage has not been experimentally proven.

The protein localises to the periplasm. It carries out the reaction L-methionyl-[protein] + a quinone + H2O = L-methionyl-(S)-S-oxide-[protein] + a quinol. The catalysed reaction is L-methionyl-[protein] + a quinone + H2O = L-methionyl-(R)-S-oxide-[protein] + a quinol. In terms of biological role, part of the MsrPQ system that repairs oxidized periplasmic proteins containing methionine sulfoxide residues (Met-O), using respiratory chain electrons. Thus protects these proteins from oxidative-stress damage caused by reactive species of oxygen and chlorine generated by the host defense mechanisms. MsrPQ is essential for the maintenance of envelope integrity under bleach stress, rescuing a wide series of structurally unrelated periplasmic proteins from methionine oxidation. The catalytic subunit MsrP is non-stereospecific, being able to reduce both (R-) and (S-) diastereoisomers of methionine sulfoxide. This chain is Protein-methionine-sulfoxide reductase catalytic subunit MsrP, found in Haemophilus ducreyi (strain 35000HP / ATCC 700724).